A 321-amino-acid chain; its full sequence is GTP 3',8-cyclase (321 aa).

Residues 5–233 (SFNRVIDYIR…QGSSKIYTLE (229 aa)) enclose the Radical SAM core domain. Position 14 (Arg-14) interacts with GTP. Residues Cys-21 and Cys-25 each contribute to the [4Fe-4S] cluster site. An S-adenosyl-L-methionine-binding site is contributed by Tyr-27. Cys-28 is a [4Fe-4S] cluster binding site. Arg-64 lines the GTP pocket. Gly-68 contributes to the S-adenosyl-L-methionine binding site. Residue Ser-95 coordinates GTP. Ser-119 contributes to the S-adenosyl-L-methionine binding site. A GTP-binding site is contributed by Lys-155. Residue Met-189 coordinates S-adenosyl-L-methionine. The [4Fe-4S] cluster site is built by Cys-249 and Cys-252. GTP is bound at residue 254–256 (RIR). Cys-266 provides a ligand contact to [4Fe-4S] cluster.

It belongs to the radical SAM superfamily. MoaA family. In terms of assembly, monomer and homodimer. The cofactor is [4Fe-4S] cluster.

It carries out the reaction GTP + AH2 + S-adenosyl-L-methionine = (8S)-3',8-cyclo-7,8-dihydroguanosine 5'-triphosphate + 5'-deoxyadenosine + L-methionine + A + H(+). It participates in cofactor biosynthesis; molybdopterin biosynthesis. Functionally, catalyzes the cyclization of GTP to (8S)-3',8-cyclo-7,8-dihydroguanosine 5'-triphosphate. The sequence is that of GTP 3',8-cyclase from Helicobacter pylori (strain J99 / ATCC 700824) (Campylobacter pylori J99).